Reading from the N-terminus, the 583-residue chain is Steryl-sulfatase (583 aa).

Positions Met1–Ser21 are cleaved as a signal peptide. Residues His22 to Arg184 are Lumenal-facing. Asp35 and Asp36 together coordinate Ca(2+). N-linked (GlcNAc...) asparagine glycosylation is present at Asn47. Cys75 lines the Ca(2+) pocket. The active-site Nucleophile is the Cys75. The residue at position 75 (Cys75) is a 3-oxoalanine (Cys). Residue His136 is part of the active site. 2 disulfides stabilise this stretch: Cys141-Cys148 and Cys170-Cys242. A helical membrane pass occupies residues Leu185–Leu208. The Cytoplasmic portion of the chain corresponds to Leu209–Pro212. A helical transmembrane segment spans residues Leu213–Leu234. The Lumenal portion of the chain corresponds to His235–Arg583. N-linked (GlcNAc...) asparagine glycosylation occurs at Asn259. Ca(2+) is bound by residues Asp342 and Gln343. Intrachain disulfides connect Cys446/Cys489, Cys481/Cys487, Cys562/Cys570, and Cys563/Cys572.

Belongs to the sulfatase family. Homodimer. The cofactor is Ca(2+). Post-translationally, the conversion to 3-oxoalanine (also known as C-formylglycine, FGly), of a serine or cysteine residue in prokaryotes and of a cysteine residue in eukaryotes, is critical for catalytic activity.

It localises to the cytoplasmic vesicle. It is found in the secretory vesicle. Its subcellular location is the microneme membrane. The protein localises to the endoplasmic reticulum membrane. The catalysed reaction is dehydroepiandrosterone 3-sulfate + H2O = 3beta-hydroxyandrost-5-en-17-one + sulfate + H(+). The enzyme catalyses estrone 3-sulfate + H2O = estrone + sulfate + H(+). Catalyzes the conversion of sulfated steroid precursors, such as dehydroepiandrosterone sulfate (DHEA-S) and estrone sulfate to the free steroid. The sequence is that of Steryl-sulfatase (STS) from Homo sapiens (Human).